The sequence spans 67 residues: Large ribosomal subunit protein uL29 (67 aa).

Belongs to the universal ribosomal protein uL29 family.

The sequence is that of Large ribosomal subunit protein uL29 from Exiguobacterium sibiricum (strain DSM 17290 / CCUG 55495 / CIP 109462 / JCM 13490 / 255-15).